We begin with the raw amino-acid sequence, 953 residues long: 2-oxoglutarate dehydrogenase E1 component (953 aa).

The protein belongs to the alpha-ketoglutarate dehydrogenase family. As to quaternary structure, homodimer. Part of the 2-oxoglutarate dehydrogenase (OGDH) complex composed of E1 (2-oxoglutarate dehydrogenase), E2 (dihydrolipoamide succinyltransferase) and E3 (dihydrolipoamide dehydrogenase); the complex contains multiple copies of the three enzymatic components (E1, E2 and E3). It depends on thiamine diphosphate as a cofactor.

It catalyses the reaction N(6)-[(R)-lipoyl]-L-lysyl-[protein] + 2-oxoglutarate + H(+) = N(6)-[(R)-S(8)-succinyldihydrolipoyl]-L-lysyl-[protein] + CO2. In terms of biological role, E1 component of the 2-oxoglutarate dehydrogenase (OGDH) complex which catalyzes the decarboxylation of 2-oxoglutarate, the first step in the conversion of 2-oxoglutarate to succinyl-CoA and CO(2). This Oceanobacillus iheyensis (strain DSM 14371 / CIP 107618 / JCM 11309 / KCTC 3954 / HTE831) protein is 2-oxoglutarate dehydrogenase E1 component.